The chain runs to 500 residues: Probable malate:quinone oxidoreductase (500 aa).

This sequence belongs to the MQO family. FAD is required as a cofactor.

It catalyses the reaction (S)-malate + a quinone = a quinol + oxaloacetate. The protein operates within carbohydrate metabolism; tricarboxylic acid cycle; oxaloacetate from (S)-malate (quinone route): step 1/1. The protein is Probable malate:quinone oxidoreductase of Bacillus cereus (strain ZK / E33L).